Here is a 312-residue protein sequence, read N- to C-terminus: Glyoxylate/hydroxypyruvate reductase A (312 aa).

R227 is a catalytic residue. H275 (proton donor) is an active-site residue.

The protein belongs to the D-isomer specific 2-hydroxyacid dehydrogenase family. GhrA subfamily.

It localises to the cytoplasm. The catalysed reaction is glycolate + NADP(+) = glyoxylate + NADPH + H(+). It carries out the reaction (R)-glycerate + NAD(+) = 3-hydroxypyruvate + NADH + H(+). The enzyme catalyses (R)-glycerate + NADP(+) = 3-hydroxypyruvate + NADPH + H(+). In terms of biological role, catalyzes the NADPH-dependent reduction of glyoxylate and hydroxypyruvate into glycolate and glycerate, respectively. In Escherichia coli O6:K15:H31 (strain 536 / UPEC), this protein is Glyoxylate/hydroxypyruvate reductase A.